Here is a 118-residue protein sequence, read N- to C-terminus: Small ribosomal subunit protein uS13 (118 aa).

Residues 92 to 118 (RRGLPVRGQRTKTNARTRKGPRKPIKK) are disordered.

This sequence belongs to the universal ribosomal protein uS13 family. In terms of assembly, part of the 30S ribosomal subunit. Forms a loose heterodimer with protein S19. Forms two bridges to the 50S subunit in the 70S ribosome.

Its function is as follows. Located at the top of the head of the 30S subunit, it contacts several helices of the 16S rRNA. In the 70S ribosome it contacts the 23S rRNA (bridge B1a) and protein L5 of the 50S subunit (bridge B1b), connecting the 2 subunits; these bridges are implicated in subunit movement. Contacts the tRNAs in the A and P-sites. In Pectobacterium carotovorum subsp. carotovorum (strain PC1), this protein is Small ribosomal subunit protein uS13.